We begin with the raw amino-acid sequence, 139 residues long: Transcription antitermination protein NusB (139 aa).

The protein belongs to the NusB family.

Functionally, involved in transcription antitermination. Required for transcription of ribosomal RNA (rRNA) genes. Binds specifically to the boxA antiterminator sequence of the ribosomal RNA (rrn) operons. This Natranaerobius thermophilus (strain ATCC BAA-1301 / DSM 18059 / JW/NM-WN-LF) protein is Transcription antitermination protein NusB.